Here is a 122-residue protein sequence, read N- to C-terminus: MIQQESRLKVADNTGAKEILTIRVLGGSGRRYAGIGDTIVATVKDAIPGGNVKKAHVVKAVVVRTRKQSRRPDGSYIKFDENAAVILKTDGEPRGTRIFGPVGRELRDKKFMKIVSLAPEVI.

Belongs to the universal ribosomal protein uL14 family. Part of the 50S ribosomal subunit. Forms a cluster with proteins L3 and L19. In the 70S ribosome, L14 and L19 interact and together make contacts with the 16S rRNA in bridges B5 and B8.

Functionally, binds to 23S rRNA. Forms part of two intersubunit bridges in the 70S ribosome. This is Large ribosomal subunit protein uL14 from Micrococcus luteus (Micrococcus lysodeikticus).